Reading from the N-terminus, the 424-residue chain is Hemagglutinin-esterase (424 aa).

The signal sequence occupies residues 1–16 (MFLLPRFVLVSCIIGS). The tract at residues 7-127 (FVLVSCIIGS…SNDIWMQNKG (121 aa)) is esterase domain 1. Residues 17 to 392 (LGFDNPPTNV…PICVYDPLPI (376 aa)) lie on the Virion surface side of the membrane. Serine 40 (nucleophile) is an active-site residue. An intrachain disulfide couples cysteine 44 to cysteine 65. 5 N-linked (GlcNAc...) asparagine; by host glycosylation sites follow: asparagine 54, asparagine 89, asparagine 153, asparagine 236, and asparagine 301. 3 cysteine pairs are disulfide-bonded: cysteine 113–cysteine 162, cysteine 197–cysteine 276, and cysteine 205–cysteine 249. Residues 128–266 (LFYTQVYKNM…GNYLAISNEL (139 aa)) form a receptor binding region. Residues 267–379 (LLTVPTKAIC…RCPTAADINT (113 aa)) form an esterase domain 2 region. The cysteines at positions 307 and 312 are disulfide-linked. Residue asparagine 316 is glycosylated (N-linked (GlcNAc...) asparagine; by host). Catalysis depends on charge relay system residues aspartate 326 and histidine 329. Residues cysteine 347 and cysteine 371 are joined by a disulfide bond. A glycan (N-linked (GlcNAc...) asparagine; by host) is linked at asparagine 358. A helical transmembrane segment spans residues 393–413 (ILLGILLGVAVIIIVVLLLYF). Over 414–424 (MVDNGTRLHDA) the chain is Intravirion. Residue asparagine 417 is glycosylated (N-linked (GlcNAc...) asparagine; by host).

The protein belongs to the influenza type C/coronaviruses hemagglutinin-esterase family. Homodimer; disulfide-linked. Forms a complex with the M protein in the pre-Golgi. Associates then with S-M complex to form a ternary complex S-M-HE. N-glycosylated in the host RER.

The protein resides in the virion membrane. It is found in the host cell membrane. The enzyme catalyses N-acetyl-9-O-acetylneuraminate + H2O = N-acetylneuraminate + acetate + H(+). It carries out the reaction N-acetyl-4-O-acetylneuraminate + H2O = N-acetylneuraminate + acetate + H(+). Structural protein that makes short spikes at the surface of the virus. Contains receptor binding and receptor-destroying activities. Mediates de-O-acetylation of N-acetyl-4-O-acetylneuraminic acid, which is probably the receptor determinant recognized by the virus on the surface of erythrocytes and susceptible cells. This receptor-destroying activity is important for virus release as it probably helps preventing self-aggregation and ensures the efficient spread of the progeny virus from cell to cell. May serve as a secondary viral attachment protein for initiating infection, the spike protein being the major one. May become a target for both the humoral and the cellular branches of the immune system. The sequence is that of Hemagglutinin-esterase from Bovine coronavirus (strain 98TXSF-110-LUN) (BCoV-LUN).